We begin with the raw amino-acid sequence, 290 residues long: 4-hydroxy-tetrahydrodipicolinate synthase (290 aa).

Thr-44 serves as a coordination point for pyruvate. The Proton donor/acceptor role is filled by Tyr-132. Lys-160 (schiff-base intermediate with substrate) is an active-site residue. Ile-202 serves as a coordination point for pyruvate.

Belongs to the DapA family. As to quaternary structure, homotetramer; dimer of dimers.

It is found in the cytoplasm. It catalyses the reaction L-aspartate 4-semialdehyde + pyruvate = (2S,4S)-4-hydroxy-2,3,4,5-tetrahydrodipicolinate + H2O + H(+). Its pathway is amino-acid biosynthesis; L-lysine biosynthesis via DAP pathway; (S)-tetrahydrodipicolinate from L-aspartate: step 3/4. Functionally, catalyzes the condensation of (S)-aspartate-beta-semialdehyde [(S)-ASA] and pyruvate to 4-hydroxy-tetrahydrodipicolinate (HTPA). The protein is 4-hydroxy-tetrahydrodipicolinate synthase of Geobacter sulfurreducens (strain ATCC 51573 / DSM 12127 / PCA).